Consider the following 197-residue polypeptide: Ribosome maturation factor RimM (197 aa).

Positions 99–174 (EDEFYQVDLI…LVVEPVAAGL (76 aa)) constitute a PRC barrel domain.

This sequence belongs to the RimM family. In terms of assembly, binds ribosomal protein uS19.

The protein localises to the cytoplasm. Functionally, an accessory protein needed during the final step in the assembly of 30S ribosomal subunit, possibly for assembly of the head region. Essential for efficient processing of 16S rRNA. May be needed both before and after RbfA during the maturation of 16S rRNA. It has affinity for free ribosomal 30S subunits but not for 70S ribosomes. The chain is Ribosome maturation factor RimM from Bartonella quintana (strain Toulouse) (Rochalimaea quintana).